Reading from the N-terminus, the 168-residue chain is GTP-dependent dephospho-CoA kinase (168 aa).

Asp-49, Val-50, Val-51, Asp-68, Lys-70, and Glu-120 together coordinate GTP.

The protein belongs to the GTP-dependent DPCK family.

It catalyses the reaction 3'-dephospho-CoA + GTP = GDP + CoA + H(+). It participates in cofactor biosynthesis; coenzyme A biosynthesis. Catalyzes the GTP-dependent phosphorylation of the 3'-hydroxyl group of dephosphocoenzyme A to form coenzyme A (CoA). This Pyrobaculum calidifontis (strain DSM 21063 / JCM 11548 / VA1) protein is GTP-dependent dephospho-CoA kinase.